Reading from the N-terminus, the 499-residue chain is Cysteine--tRNA ligase (499 aa).

C30 contributes to the Zn(2+) binding site. The 'HIGH' region motif lies at 32–42 (PTVYDRAHLGN). Zn(2+) contacts are provided by C221, H246, and E250. The 'KMSKS' region motif lies at 279–283 (KMSKS). K282 serves as a coordination point for ATP.

This sequence belongs to the class-I aminoacyl-tRNA synthetase family. In terms of assembly, monomer. The cofactor is Zn(2+).

The protein resides in the cytoplasm. The catalysed reaction is tRNA(Cys) + L-cysteine + ATP = L-cysteinyl-tRNA(Cys) + AMP + diphosphate. This chain is Cysteine--tRNA ligase, found in Cereibacter sphaeroides (strain ATCC 17023 / DSM 158 / JCM 6121 / CCUG 31486 / LMG 2827 / NBRC 12203 / NCIMB 8253 / ATH 2.4.1.) (Rhodobacter sphaeroides).